The following is a 284-amino-acid chain: N-acylphosphatidylethanolamine synthase (284 aa).

Residues 21-37 traverse the membrane as a helical segment; the sequence is TVIMAVSAFAKAVANLC. The HXXXXD motif motif lies at 67-72; sequence HMSTLD. A hydrophilic region spans residues 122–163; the sequence is GGGIYQENMNEALQRLKDGSWLHTFPEGKVFQDDVPIRRLKW.

The protein belongs to the taffazin family. As to expression, essentially present in young tissues. Expressed in roots, cotyledons, leaves, and shoot and root apical meristems.

It is found in the cell membrane. Acyltransferase that catalyzes the N-acylation of phosphatidylethanolamine to form N-acylphosphatidylethanolamine (N-acyl-PE) (e.g. NAPEs containing C16:0, C16:1, C18:0, and C18:1). Also mediates the formation of acylphosphatidylglycerol (acyl-PG) from lysoglycerophospholipid by O-acylation. Uses acyl-CoA as acyl donors. Acylates 1-acyllysophosphatidylethanolamine (1-acyllyso-PE) and 1-acyllysophosphatidylglycerol (1-acyllyso-PG) at the sn-2-position. The sequence is that of N-acylphosphatidylethanolamine synthase from Arabidopsis thaliana (Mouse-ear cress).